The sequence spans 517 residues: Glutamyl-tRNA(Gln) amidotransferase subunit A, mitochondrial (517 aa).

Residues lysine 58 and serine 131 each act as charge relay system in the active site. The interval 106-132 is disordered; sequence FGMGTHSTHSAHGPVASPAGRSAGGSS. The Acyl-ester intermediate role is filled by serine 155.

This sequence belongs to the amidase family. GatA subfamily. In terms of assembly, subunit of the heterotrimeric GatCAB amidotransferase (AdT) complex, composed of A, B and C subunits.

The protein localises to the mitochondrion. It carries out the reaction L-glutamyl-tRNA(Gln) + L-glutamine + ATP + H2O = L-glutaminyl-tRNA(Gln) + L-glutamate + ADP + phosphate + H(+). In terms of biological role, allows the formation of correctly charged Gln-tRNA(Gln) through the transamidation of misacylated Glu-tRNA(Gln) in the mitochondria. The reaction takes place in the presence of glutamine and ATP through an activated gamma-phospho-Glu-tRNA(Gln). This is Glutamyl-tRNA(Gln) amidotransferase subunit A, mitochondrial from Pyricularia oryzae (strain 70-15 / ATCC MYA-4617 / FGSC 8958) (Rice blast fungus).